The chain runs to 506 residues: Tabersonine 3-oxygenase (506 aa).

Topologically, residues 1 to 5 (MEFHE) are lumenal. A helical transmembrane segment spans residues 6–26 (SSPFVFITRGFIFIAISIAVL). The Cytoplasmic portion of the chain corresponds to 27-506 (RRIISKKTKT…DLQLIATSYA (480 aa)). Cysteine 450 contacts heme.

The protein belongs to the cytochrome P450 family. Heme serves as cofactor. Expressed in leaf epidermis.

The protein localises to the endoplasmic reticulum membrane. It catalyses the reaction 16-methoxytabersonine + reduced [NADPH--hemoprotein reductase] + O2 = (3R)-1,2-didehydro-3-hydroxy-16-methoxy-2,3-dihydrotabersonine + oxidized [NADPH--hemoprotein reductase] + H2O + H(+). The catalysed reaction is (-)-tabersonine + reduced [NADPH--hemoprotein reductase] + O2 = (3R)-1,2-didehydro-3-hydroxy-2,3-dihydrotabersonine + oxidized [NADPH--hemoprotein reductase] + H2O + H(+). It participates in alkaloid biosynthesis; vindoline biosynthesis. Cytochrome P450 catalyzing the monooxygenation of 16-methoxytabersonine, 16-hydroxytabersonine and tabersonine, but not of 2,3-dihydrotabersonine. Converts the C2,C3 alkene of tabersonine and 16-methoxytabersonine to the epoxides, which then spontaneously open to form the corresponding imine alcohols. Inactive in converting amyrin to ursolic acid. In Catharanthus roseus (Madagascar periwinkle), this protein is Tabersonine 3-oxygenase.